Consider the following 153-residue polypeptide: Pheromone-binding protein Gp-9 (153 aa).

An N-terminal signal peptide occupies residues 1–19 (MKTFVLHIFIFALVAFASA). Disulfide bonds link cysteine 37-cysteine 77, cysteine 73-cysteine 129, and cysteine 118-cysteine 138.

This sequence belongs to the PBP/GOBP family. As to quaternary structure, homodimer.

It is found in the secreted. Colony queen number, a major feature of social organization, is associated with worker genotype for Gp-9. Colonies are headed by either a single reproductive queen (monogyne form) or multiple queens (polygyne form). Differences in worker Gp-9 genotypes between social forms may cause differences in workers' abilities to recognize queens and regulate their numbers. This is Pheromone-binding protein Gp-9 from Solenopsis invicta (Red imported fire ant).